Consider the following 621-residue polypeptide: tRNA uridine 5-carboxymethylaminomethyl modification enzyme MnmG (621 aa).

An FAD-binding site is contributed by 9 to 14 (GGGHAG). An NAD(+)-binding site is contributed by 270–284 (GPRYCPSIEDKIVKF).

This sequence belongs to the MnmG family. Homodimer. Heterotetramer of two MnmE and two MnmG subunits. FAD is required as a cofactor.

The protein resides in the cytoplasm. Its function is as follows. NAD-binding protein involved in the addition of a carboxymethylaminomethyl (cmnm) group at the wobble position (U34) of certain tRNAs, forming tRNA-cmnm(5)s(2)U34. The chain is tRNA uridine 5-carboxymethylaminomethyl modification enzyme MnmG from Borreliella afzelii (strain PKo) (Borrelia afzelii).